Here is a 77-residue protein sequence, read N- to C-terminus: Translation initiation factor IF-1, chloroplastic (77 aa).

Residues 1 to 72 (MNKQGLFQME…TKGRIVYRQR (72 aa)) enclose the S1-like domain.

It belongs to the IF-1 family. As to quaternary structure, component of the 30S ribosomal translation pre-initiation complex which assembles on the 30S ribosome in the order IF-2 and IF-3, IF-1 and N-formylmethionyl-tRNA(fMet); mRNA recruitment can occur at any time during PIC assembly.

The protein localises to the plastid. The protein resides in the chloroplast. One of the essential components for the initiation of protein synthesis. Stabilizes the binding of IF-2 and IF-3 on the 30S subunit to which N-formylmethionyl-tRNA(fMet) subsequently binds. Helps modulate mRNA selection, yielding the 30S pre-initiation complex (PIC). Upon addition of the 50S ribosomal subunit IF-1, IF-2 and IF-3 are released leaving the mature 70S translation initiation complex. In Nephroselmis olivacea (Green alga), this protein is Translation initiation factor IF-1, chloroplastic.